The following is a 216-amino-acid chain: Pyrrolidone-carboxylate peptidase (216 aa).

Catalysis depends on residues Glu80, Cys143, and His168.

It belongs to the peptidase C15 family. Homotetramer.

The protein localises to the cytoplasm. It catalyses the reaction Release of an N-terminal pyroglutamyl group from a polypeptide, the second amino acid generally not being Pro.. In terms of biological role, removes 5-oxoproline from various penultimate amino acid residues except L-proline. The protein is Pyrrolidone-carboxylate peptidase of Cupriavidus pinatubonensis (strain JMP 134 / LMG 1197) (Cupriavidus necator (strain JMP 134)).